Reading from the N-terminus, the 536-residue chain is Cytochrome c oxidase subunit 1 (536 aa).

A helical membrane pass occupies residues 19–39 (IGMTYLGFGMLSAMMGTGMSV). Residue Glu44 coordinates Ca(2+). His67 is a Fe(II)-heme a binding site. The next 6 helical transmembrane spans lie at 69-89 (LLMM…NFFL), 103-123 (LNNI…CSVL), 152-172 (AMFA…NFMV), 188-208 (PLFA…LPVL), 240-260 (LFWF…FGVM), and 273-293 (FGEM…FLVW). Residue His246 coordinates Cu cation. A cross-link (1'-histidyl-3'-tyrosine (His-Tyr)) is located at residues 246–250 (HPEVY). Position 250 (Tyr250) interacts with O2. 2 residues coordinate Cu cation: His295 and His296. The next 2 membrane-spanning stretches (helical) occupy residues 315–335 (MVIA…IYGG) and 341–361 (VPML…LTGV). His373 and Asp374 together coordinate Mg(2+). His381 is a binding site for heme a3. Fe(II)-heme a is bound at residue His383. 2 helical membrane passes run 388–408 (MGAL…MFGL) and 418–438 (HFWL…FLGL). Pro446 is a binding site for Ca(2+). Residues 461-481 (MGSAMSVMSVLVGLKSVLVQL) traverse the membrane as a helical segment.

This sequence belongs to the heme-copper respiratory oxidase family. As to quaternary structure, component of the cytochrome c oxidase (complex IV, CIV), a multisubunit enzyme composed of a catalytic core of 3 subunits and several supernumerary subunits. The complex exists as a monomer or a dimer and forms supercomplexes (SCs) in the inner mitochondrial membrane with ubiquinol-cytochrome c oxidoreductase (cytochrome b-c1 complex, complex III, CIII). Heme serves as cofactor. It depends on Cu cation as a cofactor.

Its subcellular location is the mitochondrion inner membrane. It carries out the reaction 4 Fe(II)-[cytochrome c] + O2 + 8 H(+)(in) = 4 Fe(III)-[cytochrome c] + 2 H2O + 4 H(+)(out). Its pathway is energy metabolism; oxidative phosphorylation. In terms of biological role, component of the cytochrome c oxidase, the last enzyme in the mitochondrial electron transport chain which drives oxidative phosphorylation. The respiratory chain contains 3 multisubunit complexes succinate dehydrogenase (complex II, CII), ubiquinol-cytochrome c oxidoreductase (cytochrome b-c1 complex, complex III, CIII) and cytochrome c oxidase (complex IV, CIV), that cooperate to transfer electrons derived from NADH and succinate to molecular oxygen, creating an electrochemical gradient over the inner membrane that drives transmembrane transport and the ATP synthase. Cytochrome c oxidase is the component of the respiratory chain that catalyzes the reduction of oxygen to water. Electrons originating from reduced cytochrome c in the intermembrane space (IMS) are transferred via the dinuclear copper A center (CU(A)) of subunit 2 and heme A of subunit 1 to the active site in subunit 1, a binuclear center (BNC) formed by heme A3 and copper B (CU(B)). The BNC reduces molecular oxygen to 2 water molecules using 4 electrons from cytochrome c in the IMS and 4 protons from the mitochondrial matrix. This chain is Cytochrome c oxidase subunit 1 (COX1), found in Debaryomyces hansenii (strain ATCC 36239 / CBS 767 / BCRC 21394 / JCM 1990 / NBRC 0083 / IGC 2968) (Yeast).